Consider the following 229-residue polypeptide: Endo-1,4-beta-xylanase 1 (229 aa).

The signal sequence occupies residues 1 to 19 (MVAFSSLICALTSIASTLA). A propeptide spanning residues 20–51 (MPTGLEPESSVNVTERGMYDFVLGAHNDHRRR) is cleaved from the precursor. Asparagine 31 carries N-linked (GlcNAc...) asparagine glycosylation. Residues 42-228 (LGAHNDHRRR…GSGSASQSVS (187 aa)) form the GH11 domain. Tyrosine 117 provides a ligand contact to substrate. Glutamate 126 functions as the Nucleophile in the catalytic mechanism. Positions 128, 160, 164, 174, and 209 each coordinate substrate. Residue glutamate 215 is the Proton donor of the active site.

Belongs to the glycosyl hydrolase 11 (cellulase G) family.

Its subcellular location is the secreted. The catalysed reaction is Endohydrolysis of (1-&gt;4)-beta-D-xylosidic linkages in xylans.. Its pathway is glycan degradation; xylan degradation. Its function is as follows. Glycoside hydrolase involved in the hydrolysis of xylan, a major plant cell wall hemicellulose made up of 1,4-beta-linked D-xylopyranose residues. Catalyzes the endohydrolysis of the main-chain 1,4-beta-glycosidic bonds connecting the xylose subunits yielding various xylooligosaccharides and xylose. The sequence is that of Endo-1,4-beta-xylanase 1 from Hypocrea jecorina (strain QM6a) (Trichoderma reesei).